The chain runs to 420 residues: Serine hydroxymethyltransferase (420 aa).

Residues leucine 121 and 125 to 127 contribute to the (6S)-5,6,7,8-tetrahydrofolate site; that span reads GHL. Lysine 230 is subject to N6-(pyridoxal phosphate)lysine. Residues glutamate 246 and 354–356 contribute to the (6S)-5,6,7,8-tetrahydrofolate site; that span reads SPF.

It belongs to the SHMT family. In terms of assembly, homodimer. It depends on pyridoxal 5'-phosphate as a cofactor.

It is found in the cytoplasm. The enzyme catalyses (6R)-5,10-methylene-5,6,7,8-tetrahydrofolate + glycine + H2O = (6S)-5,6,7,8-tetrahydrofolate + L-serine. It participates in one-carbon metabolism; tetrahydrofolate interconversion. The protein operates within amino-acid biosynthesis; glycine biosynthesis; glycine from L-serine: step 1/1. In terms of biological role, catalyzes the reversible interconversion of serine and glycine with tetrahydrofolate (THF) serving as the one-carbon carrier. This reaction serves as the major source of one-carbon groups required for the biosynthesis of purines, thymidylate, methionine, and other important biomolecules. Also exhibits THF-independent aldolase activity toward beta-hydroxyamino acids, producing glycine and aldehydes, via a retro-aldol mechanism. The sequence is that of Serine hydroxymethyltransferase from Rickettsia peacockii (strain Rustic).